The following is a 328-amino-acid chain: Glycerol-3-phosphate dehydrogenase [NAD(P)+] (328 aa).

NADPH is bound by residues W15, H35, Y51, and K107. K107, G135, and S137 together coordinate sn-glycerol 3-phosphate. Position 139 (A139) interacts with NADPH. K190, D243, S253, R254, and N255 together coordinate sn-glycerol 3-phosphate. The active-site Proton acceptor is K190. R254 is a binding site for NADPH. The NADPH site is built by L276 and E278.

Belongs to the NAD-dependent glycerol-3-phosphate dehydrogenase family.

Its subcellular location is the cytoplasm. The catalysed reaction is sn-glycerol 3-phosphate + NAD(+) = dihydroxyacetone phosphate + NADH + H(+). It catalyses the reaction sn-glycerol 3-phosphate + NADP(+) = dihydroxyacetone phosphate + NADPH + H(+). It participates in membrane lipid metabolism; glycerophospholipid metabolism. Catalyzes the reduction of the glycolytic intermediate dihydroxyacetone phosphate (DHAP) to sn-glycerol 3-phosphate (G3P), the key precursor for phospholipid synthesis. The chain is Glycerol-3-phosphate dehydrogenase [NAD(P)+] from Rhodopseudomonas palustris (strain BisA53).